The following is a 719-amino-acid chain: Pesticidal crystal protein Cry1Ib (719 aa).

It belongs to the delta endotoxin family.

In terms of biological role, promotes colloidosmotic lysis by binding to the midgut epithelial cells of certain coleopteran and lepidopteran species. Active on Plutella xylostella but not on Bombyx mori. This chain is Pesticidal crystal protein Cry1Ib (cry1Ib), found in Bacillus thuringiensis subsp. entomocidus.